The sequence spans 945 residues: MYGAGGGRAKAERKGGVKEEAGPGGTGTGGNRVELLVFGYACKLFRDDERALAQEQGQHLIPWMGDHKILIDRYDGRGHLHDLSAYDAEYATWNRDYQLSEEEARVEALCDEERYLALHTDLLEEEARQEEEYKRLSEALAEDGNYSAVGFTYGSDYYDPSEPTEEEEPSKQREKSEAENLEENEEPFIAPLGLSVPSDVELPPTAKMHAIIERTANFVCKQGAQFEIMLKAKQARNSQFDFLRFDHYLNPYYKFIQKAMKEGRYTVLAESKSEEKKKSGPTSDNEEEDDEEDGSYLHPSLFASKKSSRLEELMKPLKVVDPDHPLAALVRKAQADSSAPAPPTADGTPAQPSQVEYTADSTVAAMYYSYYMLPDGTYCLAPPPPGIDVATYYSTLPAGVTVSSSPGVTTTVPPPPGTTPPPPPTTAESSSGVTSTTTTTSALAPVAIIPPPPDIQPVIDKLAEYVARNGLKFETSVRAKNDQRFEFLQPWHQYNAYYEFKKQFFLQKEGGGSTQAASTAEEAPTETAVEESSEAGEDGAPEGMAETGGRGSGKKEAGSSKSTVDGKLVKASFAPISFAIKAKENDLLPLEKNRVKLDDDSEEDEESRECQESTSSVANPSPAAAPPSAVVEEKKPQLTQEELEAKQAKQKLEDRLAAAAREKLAQASKESKEKQLQAERKRKAALFLQTLKNPLPDAEVGKLEESTFGVEETGVMPCPLLVGGRTLPMLEGKPPERPSSRCRDPPREEEREKKKKKHKKRSRTRSRSPKYHSSSKPRSRSHSKAKHSLPSAYRTVRRSRSRSRSPRRRAHSPERRREDRSVPTAYRMSGSPGVSRKRTRSRSPHEKKKKRRSRSRTKAKARSQSTSPSKQAAQRPSAHSAHSASISPVESRGSSQERSRGVSQEKDGQISSAIVSSVQSKITQDLMAKVRAMLAASKNLQTSAS.

Disordered stretches follow at residues 1–28 (MYGA…GTGT) and 157–190 (YYDP…PFIA). Basic and acidic residues-rich tracts occupy residues 9–21 (AKAE…KEEA) and 169–178 (PSKQREKSEA). The SURP motif 1 repeat unit spans residues 211 to 253 (IIERTANFVCKQGAQFEIMLKAKQARNSQFDFLRFDHYLNPYY). The segment at 269–298 (AESKSEEKKKSGPTSDNEEEDDEEDGSYLH) is disordered. Position 283 is a phosphoserine (Ser-283). Positions 284–294 (DNEEEDDEEDG) are enriched in acidic residues. Lys-315 bears the N6-acetyllysine mark. Disordered regions lie at residues 332 to 355 (KAQA…PSQV) and 403 to 438 (SSSP…STTT). The span at 335–352 (ADSSAPAPPTADGTPAQP) shows a compositional bias: low complexity. The segment covering 412-425 (VPPPPGTTPPPPPT) has biased composition (pro residues). Over residues 426-438 (TAESSSGVTSTTT) the composition is skewed to low complexity. The stretch at 458 to 498 (VIDKLAEYVARNGLKFETSVRAKNDQRFEFLQPWHQYNAYY) is one SURP motif 2 repeat. Disordered regions lie at residues 512-566 (GSTQ…TVDG), 589-680 (PLEK…QAER), and 714-921 (GVMP…VQSK). Over residues 514-527 (TQAASTAEEAPTET) the composition is skewed to low complexity. The span at 528–540 (AVEESSEAGEDGA) shows a compositional bias: acidic residues. Basic and acidic residues predominate over residues 589-598 (PLEKNRVKLD). Residues Ser-601 and Ser-621 each carry the phosphoserine modification. Positions 615–630 (SSVANPSPAAAPPSAV) are enriched in low complexity. Positions 632 to 686 (EEKKPQLTQEELEAKQAKQKLEDRLAAAAREKLAQASKESKEKQLQAERKRKAAL) form a coiled coil. Residue Thr-639 is modified to Phosphothreonine. 2 stretches are compositionally biased toward basic and acidic residues: residues 643–679 (LEAK…LQAE) and 733–752 (KPPE…EERE). Composition is skewed to basic residues over residues 753–787 (KKKK…KAKH) and 795–810 (TVRR…RRRA). The segment covering 811 to 821 (HSPERRREDRS) has biased composition (basic and acidic residues). Residues Ser-829 and Ser-831 each carry the phosphoserine modification. Residues 835–861 (SRKRTRSRSPHEKKKKRRSRSRTKAKA) show a composition bias toward basic residues. A compositionally biased stretch (low complexity) spans 871-894 (QAAQRPSAHSAHSASISPVESRGS). Positions 895 to 908 (SQERSRGVSQEKDG) are enriched in basic and acidic residues. 2 positions are modified to phosphoserine: Ser-899 and Ser-903. Residues 909–920 (QISSAIVSSVQS) show a composition bias toward low complexity.

It localises to the nucleus. Its function is as follows. Plays a role as an alternative splicing regulator. Regulate its own expression at the level of RNA processing. Also regulates the splicing of fibronectin and CD45 genes. May act, at least in part, by interaction with other R/S-containing splicing factors. Represses the splicing of MAPT/Tau exon 10. This is Splicing factor, suppressor of white-apricot homolog (Sfswap) from Rattus norvegicus (Rat).